The primary structure comprises 654 residues: tRNA 5-methylaminomethyl-2-thiouridine biosynthesis bifunctional protein MnmC (654 aa).

A tRNA (mnm(5)s(2)U34)-methyltransferase region spans residues 1–235 (MSDFQHAQLD…KREMLSGTYQ (235 aa)). The FAD-dependent cmnm(5)s(2)U34 oxidoreductase stretch occupies residues 261–654 (VGGGLAGCAS…LRDLVRGQRG (394 aa)).

It in the N-terminal section; belongs to the methyltransferase superfamily. tRNA (mnm(5)s(2)U34)-methyltransferase family. In the C-terminal section; belongs to the DAO family. FAD is required as a cofactor.

The protein localises to the cytoplasm. It carries out the reaction 5-aminomethyl-2-thiouridine(34) in tRNA + S-adenosyl-L-methionine = 5-methylaminomethyl-2-thiouridine(34) in tRNA + S-adenosyl-L-homocysteine + H(+). Catalyzes the last two steps in the biosynthesis of 5-methylaminomethyl-2-thiouridine (mnm(5)s(2)U) at the wobble position (U34) in tRNA. Catalyzes the FAD-dependent demodification of cmnm(5)s(2)U34 to nm(5)s(2)U34, followed by the transfer of a methyl group from S-adenosyl-L-methionine to nm(5)s(2)U34, to form mnm(5)s(2)U34. This Pseudomonas aeruginosa (strain ATCC 15692 / DSM 22644 / CIP 104116 / JCM 14847 / LMG 12228 / 1C / PRS 101 / PAO1) protein is tRNA 5-methylaminomethyl-2-thiouridine biosynthesis bifunctional protein MnmC.